Here is a 251-residue protein sequence, read N- to C-terminus: Hydroxypyruvate/pyruvate aldolase (251 aa).

Histidine 44 (proton acceptor) is an active-site residue. Arginine 69 is a binding site for 3-hydroxypyruvate. A Mg(2+)-binding site is contributed by glutamate 145. 2 residues coordinate 3-hydroxypyruvate: threonine 170 and aspartate 171. A Mg(2+)-binding site is contributed by aspartate 171.

It belongs to the HpcH/HpaI aldolase family. As to quaternary structure, homohexamer. Trimer of homodimers. Mn(2+) serves as cofactor. The cofactor is Mg(2+). Co(2+) is required as a cofactor. Requires Zn(2+) as cofactor.

The enzyme catalyses D-glyceraldehyde + 3-hydroxypyruvate = 2-dehydro-D-galactonate. It carries out the reaction D-glyceraldehyde + pyruvate = 2-dehydro-3-deoxy-L-galactonate. The catalysed reaction is L-glyceraldehyde + 3-hydroxypyruvate = (3S,4S,5S)-3,4,5,6-tetrahydroxy-2-oxohexanoate. It catalyses the reaction (R)-lactaldehyde + 3-hydroxypyruvate = (3S,4S,5R)-3,4,5-trihydroxy-2-oxohexanoate. The enzyme catalyses (R)-lactaldehyde + 3-hydroxypyruvate = (3S,4R,5R)-3,4,5-trihydroxy-2-oxohexanoate. It carries out the reaction (S)-lactaldehyde + 3-hydroxypyruvate = (3S,4S,5S)-3,4,5-trihydroxy-2-oxohexanoate. The catalysed reaction is D-erythrose + 3-hydroxypyruvate = (3S,4S,5R,6R)-3,4,5,6,7-pentahydroxy-2-oxoheptanoate. With respect to regulation, binding of substrate induces a dynamic movement of the metal cofactor between an inactive coordination sphere to a catalytically active one. When oxaloacetate is used as substrate, activity is increased in the presence of micromolar concentrations of inorganic phosphate. The phosphate does not improve the binding of the substrate, but exclusively increases its rate of decarboxylation. Excessive phosphate concentrations negatively affect the reaction rate by removing the metal cofactor. Aldolase which can catalyze in vitro the aldolisation reaction between hydroxypyruvate (HPA) or pyruvate (PA) and D-glyceraldehyde (D-GA). The condensation of hydroxypyruvate and D-glyceraldehyde produces 2-dehydro-D-galactonate as the major product. The condensation of pyruvate and D-glyceraldehyde produces 2-dehydro-3-deoxy-L-galactonate. Can use other electrophilic substrates such as L-glyceraldehyde, D- and L-lactaldehyde and D-erythrose. Also catalyzes the retro-aldol type decarboxylation of oxaloacetate, a general property of known pyruvate aldolases. This Rhizorhabdus wittichii (strain DSM 6014 / CCUG 31198 / JCM 15750 / NBRC 105917 / EY 4224 / RW1) (Sphingomonas wittichii) protein is Hydroxypyruvate/pyruvate aldolase.